Here is a 146-residue protein sequence, read N- to C-terminus: UPF0742 protein SPAC977.02 (146 aa).

The chain crosses the membrane as a helical span at residues 38-60 (LTVKYCLAVKLLIYLLYCWYIYS).

The protein belongs to the UPF0742 family.

It localises to the cytoplasm. It is found in the nucleus membrane. The sequence is that of UPF0742 protein SPAC977.02 from Schizosaccharomyces pombe (strain 972 / ATCC 24843) (Fission yeast).